The following is a 506-amino-acid chain: UDP-N-acetylmuramoyl-L-alanyl-D-glutamate--2,6-diaminopimelate ligase (506 aa).

Ser-42 contributes to the UDP-N-acetyl-alpha-D-muramoyl-L-alanyl-D-glutamate binding site. An ATP-binding site is contributed by 125–131 (GTSGKTT). Residues 166–167 (TT), Ser-193, and Arg-201 contribute to the UDP-N-acetyl-alpha-D-muramoyl-L-alanyl-D-glutamate site. At Lys-233 the chain carries N6-carboxylysine. Residues Arg-395, 419 to 422 (DNPR), Gly-475, and Glu-479 each bind meso-2,6-diaminopimelate. A Meso-diaminopimelate recognition motif motif is present at residues 419–422 (DNPR).

Belongs to the MurCDEF family. MurE subfamily. Mg(2+) serves as cofactor. Carboxylation is probably crucial for Mg(2+) binding and, consequently, for the gamma-phosphate positioning of ATP.

The protein localises to the cytoplasm. It catalyses the reaction UDP-N-acetyl-alpha-D-muramoyl-L-alanyl-D-glutamate + meso-2,6-diaminopimelate + ATP = UDP-N-acetyl-alpha-D-muramoyl-L-alanyl-gamma-D-glutamyl-meso-2,6-diaminopimelate + ADP + phosphate + H(+). Its pathway is cell wall biogenesis; peptidoglycan biosynthesis. In terms of biological role, catalyzes the addition of meso-diaminopimelic acid to the nucleotide precursor UDP-N-acetylmuramoyl-L-alanyl-D-glutamate (UMAG) in the biosynthesis of bacterial cell-wall peptidoglycan. The protein is UDP-N-acetylmuramoyl-L-alanyl-D-glutamate--2,6-diaminopimelate ligase of Streptomyces avermitilis (strain ATCC 31267 / DSM 46492 / JCM 5070 / NBRC 14893 / NCIMB 12804 / NRRL 8165 / MA-4680).